Here is a 1241-residue protein sequence, read N- to C-terminus: ATP-dependent helicase/nuclease subunit A (1241 aa).

The 474-residue stretch at 12–485 (SQWTDDQWKA…IDLAKNFRSR (474 aa)) folds into the UvrD-like helicase ATP-binding domain. 33-40 (AAAGSGKT) is a binding site for ATP. Residues 505–805 (GEIDYDADAE…RIMTIHKSKG (301 aa)) enclose the UvrD-like helicase C-terminal domain.

The protein belongs to the helicase family. AddA subfamily. As to quaternary structure, heterodimer of AddA and AddB/RexB. It depends on Mg(2+) as a cofactor.

It carries out the reaction Couples ATP hydrolysis with the unwinding of duplex DNA by translocating in the 3'-5' direction.. The catalysed reaction is ATP + H2O = ADP + phosphate + H(+). The heterodimer acts as both an ATP-dependent DNA helicase and an ATP-dependent, dual-direction single-stranded exonuclease. Recognizes the chi site generating a DNA molecule suitable for the initiation of homologous recombination. The AddA nuclease domain is required for chi fragment generation; this subunit has the helicase and 3' -&gt; 5' nuclease activities. The protein is ATP-dependent helicase/nuclease subunit A of Bacillus anthracis.